Consider the following 178-residue polypeptide: MAELTTLARPYAKAAFEHAQAHQQLANWSAMLGLAAAVSQDDTMQRMLKAPRVTSAQKATTFIEVCGEKFDAKAQNFIHVVAENDRLPLLPEIAELFDLYKAEQEKSVDVDVTSAFALNQEQQDKLAKVLSARLGREVRLHAAEDASLIGGVVIRAGDLVIDGSVRGKIAKLAEALKS.

This sequence belongs to the ATPase delta chain family. In terms of assembly, F-type ATPases have 2 components, F(1) - the catalytic core - and F(0) - the membrane proton channel. F(1) has five subunits: alpha(3), beta(3), gamma(1), delta(1), epsilon(1). F(0) has three main subunits: a(1), b(2) and c(10-14). The alpha and beta chains form an alternating ring which encloses part of the gamma chain. F(1) is attached to F(0) by a central stalk formed by the gamma and epsilon chains, while a peripheral stalk is formed by the delta and b chains.

It localises to the cell inner membrane. Its function is as follows. F(1)F(0) ATP synthase produces ATP from ADP in the presence of a proton or sodium gradient. F-type ATPases consist of two structural domains, F(1) containing the extramembraneous catalytic core and F(0) containing the membrane proton channel, linked together by a central stalk and a peripheral stalk. During catalysis, ATP synthesis in the catalytic domain of F(1) is coupled via a rotary mechanism of the central stalk subunits to proton translocation. This protein is part of the stalk that links CF(0) to CF(1). It either transmits conformational changes from CF(0) to CF(1) or is implicated in proton conduction. The polypeptide is ATP synthase subunit delta (Pseudomonas syringae pv. tomato (strain ATCC BAA-871 / DC3000)).